The sequence spans 99 residues: uncharacterized protein (99 aa).

A helical membrane pass occupies residues 10–29 (ELSVHTGTVTHTIFVYVFLG).

The protein resides in the membrane. This is an uncharacterized protein from Schizosaccharomyces pombe (strain 972 / ATCC 24843) (Fission yeast).